The primary structure comprises 652 residues: Probable export ATP-binding/permease protein PFL_2149 (652 aa).

Residues 6–244 (LHLTGISRSF…APSEPPVSVR (239 aa)) form the ABC transporter domain. Residue 42–49 (GASGSGKS) participates in ATP binding. 5 helical membrane-spanning segments follow: residues 251-271 (LVAS…ALVS), 277-297 (LLTM…VAIG), 525-545 (LALL…IGVM), 586-606 (IGGA…TLFI), and 615-635 (MGSI…FGFV).

This sequence belongs to the ABC transporter superfamily. Macrolide exporter (TC 3.A.1.122) family. In terms of assembly, probably part of a tripartite efflux system, which is composed of an inner membrane transporter, a periplasmic membrane fusion protein, and an outer membrane component.

Its subcellular location is the cell inner membrane. Probably part of a tripartite efflux system. This Pseudomonas fluorescens (strain ATCC BAA-477 / NRRL B-23932 / Pf-5) protein is Probable export ATP-binding/permease protein PFL_2149.